We begin with the raw amino-acid sequence, 236 residues long: Outer membrane protein P.III (236 aa).

The signal sequence occupies residues 1–22; it reads MTKQLKLSALFVALLASGTAVA. Tandem repeats lie at residues 69-70, 71-72, 73-74, and 75-76. The segment at 69 to 76 is 4 X 2 AA tandem repeats of X-P; that stretch reads VPEPEPAP. Positions 86–223 constitute an OmpA-like domain; it reads YVDETISLSA…RVDVKIRSIV (138 aa). Residues Cys185 and Cys208 are joined by a disulfide bond.

It belongs to the outer membrane OOP (TC 1.B.6) superfamily.

It localises to the cell outer membrane. This chain is Outer membrane protein P.III, found in Neisseria gonorrhoeae.